A 97-amino-acid polypeptide reads, in one-letter code: MIVPRLALPISLALQRVSRRVAEHPHNLRILQRHMSSVYFRSGAIKPKPEEMPFGLLAIFCAVIPGLFVGATISKNVANFLEENDLFVPADDDDDED.

The transit peptide at 1–35 (MIVPRLALPISLALQRVSRRVAEHPHNLRILQRHM) directs the protein to the mitochondrion. A helical transmembrane segment spans residues 53–73 (PFGLLAIFCAVIPGLFVGATI).

It belongs to the SMDT1/EMRE family.

Its subcellular location is the mitochondrion inner membrane. Functionally, essential regulatory subunit of the mitochondrial calcium uniporter MCU channel, a protein that mediates calcium uptake into mitochondria. The polypeptide is Essential MCU regulator, mitochondrial (Drosophila melanogaster (Fruit fly)).